We begin with the raw amino-acid sequence, 479 residues long: Preferentially expressed antigen in melanoma-like protein 7 (479 aa).

One copy of the LRR 1; degenerate repeat lies at 96 to 124 (MGRLKKVDFRDAQHHASLDMQDEREGRDY). The LRR 2; degenerate repeat unit spans residues 179 to 203 (HLCCEKLEIGAVEVSKVRNVLKFLQ). The stretch at 204 to 230 (PELIKELKLNTVGNLSKLAKFVPFIRK) is one LRR 3; degenerate repeat. An LRR 4; degenerate repeat occupies 231 to 265 (MRNLQKLMLVRTFGTRTFTQEEKQNISKIISLFCK). LRR repeat units follow at residues 266-291 (LSCL…LRCL), 292-323 (EAPL…SQLK), 324-347 (HLCL…LKRV), 348-375 (AANL…ALIK), and 376-400 (CTQL…FLHR).

Belongs to the PRAME family. As to quaternary structure, interacts with UHRF1. As to expression, seems to be specific to pluripotent tissues in the early embryo. Not detected in somatic tissues.

In terms of biological role, promotes maintenance and self-renewal of pluripotent embryonic stem cells (ESCs), downstream of LIF/STAT3. Maintains the pluripotency state of ESCs by repressing DNA methylation through the regulation of UHRF1 stability. Mediates the proteasomal degradation of UHRF1. Is required for the establishment of the blastocyst. The chain is Preferentially expressed antigen in melanoma-like protein 7 from Mus musculus (Mouse).